The chain runs to 501 residues: Lysine--tRNA ligase (501 aa).

Positions 402 and 409 each coordinate Mg(2+).

The protein belongs to the class-II aminoacyl-tRNA synthetase family. As to quaternary structure, homodimer. Requires Mg(2+) as cofactor.

It localises to the cytoplasm. It carries out the reaction tRNA(Lys) + L-lysine + ATP = L-lysyl-tRNA(Lys) + AMP + diphosphate. This Helicobacter pylori (strain J99 / ATCC 700824) (Campylobacter pylori J99) protein is Lysine--tRNA ligase (lysS).